The primary structure comprises 353 residues: Protein pelota homolog (353 aa).

This sequence belongs to the eukaryotic release factor 1 family. Pelota subfamily. As to quaternary structure, monomer. Requires a divalent metal cation as cofactor.

The protein localises to the cytoplasm. Functionally, may function in recognizing stalled ribosomes, interact with stem-loop structures in stalled mRNA molecules, and effect endonucleolytic cleavage of the mRNA. May play a role in the release non-functional ribosomes and degradation of damaged mRNAs. Has endoribonuclease activity. The sequence is that of Protein pelota homolog from Methanopyrus kandleri (strain AV19 / DSM 6324 / JCM 9639 / NBRC 100938).